The chain runs to 231 residues: Sugar fermentation stimulation protein homolog (231 aa).

It belongs to the SfsA family.

This Geotalea uraniireducens (strain Rf4) (Geobacter uraniireducens) protein is Sugar fermentation stimulation protein homolog.